We begin with the raw amino-acid sequence, 208 residues long: Uracil phosphoribosyltransferase (208 aa).

Residues R78, R103, and 130–138 contribute to the 5-phospho-alpha-D-ribose 1-diphosphate site; that span reads DPMLATGVS. Uracil contacts are provided by residues I193 and 198–200; that span reads GDA. D199 lines the 5-phospho-alpha-D-ribose 1-diphosphate pocket.

This sequence belongs to the UPRTase family. It depends on Mg(2+) as a cofactor.

It catalyses the reaction UMP + diphosphate = 5-phospho-alpha-D-ribose 1-diphosphate + uracil. It participates in pyrimidine metabolism; UMP biosynthesis via salvage pathway; UMP from uracil: step 1/1. With respect to regulation, allosterically activated by GTP. Functionally, catalyzes the conversion of uracil and 5-phospho-alpha-D-ribose 1-diphosphate (PRPP) to UMP and diphosphate. The chain is Uracil phosphoribosyltransferase from Thermosipho melanesiensis (strain DSM 12029 / CIP 104789 / BI429).